Reading from the N-terminus, the 161-residue chain is MSIVTKSIVNADAEARYLSPGELDRIKSFVLSGQRRLRIAQILTDNRERIVKQGGQQLFQKRPDVVSPGGNAYGEEMTATCLRDLDYYLRLVTYGIVAGDVTPIEEIGLVGVKEMYNSLGTPISGVAVGVKCMKSVACSLLAGEDSAEAGFYFDYTLGAMQ.

Residue N71 is modified to N4-methylasparagine. C81 serves as a coordination point for (2R,3E)-phycocyanobilin.

It belongs to the phycobiliprotein family. Heterodimer of an alpha and a beta chain. In terms of processing, contains one covalently linked phycocyanobilin chromophore.

It localises to the plastid. The protein resides in the chloroplast thylakoid membrane. Light-harvesting photosynthetic bile pigment-protein from the phycobiliprotein complex. Allophycocyanin has a maximum absorption at approximately 650 nanometers. The protein is Allophycocyanin alpha chain (apcA) of Pyropia haitanensis (Red seaweed).